Here is a 98-residue protein sequence, read N- to C-terminus: Small ribosomal subunit protein bS18 (98 aa).

Belongs to the bacterial ribosomal protein bS18 family. Part of the 30S ribosomal subunit. Forms a tight heterodimer with protein bS6.

Functionally, binds as a heterodimer with protein bS6 to the central domain of the 16S rRNA, where it helps stabilize the platform of the 30S subunit. This Flavobacterium johnsoniae (strain ATCC 17061 / DSM 2064 / JCM 8514 / BCRC 14874 / CCUG 350202 / NBRC 14942 / NCIMB 11054 / UW101) (Cytophaga johnsonae) protein is Small ribosomal subunit protein bS18.